The sequence spans 707 residues: MASPADSCIQFTRHASDVLLNLNRLRSRDILTDVVIVVSREQFRAHKTVLMACSGLFYSIFTDQLKCNLSVINLDPEISPEGFCILLDFMYTSRLNLREGNIMAVMTTAMYLQMEHVVDTCRKFIKASEAEMAPALKPPREEFLNSRMLMPHDIMAYRGREVVENNMPLRNTPGCESRAFAPPLYSGLSTPPASYPMYSHLPLSTFLFSDEELRDAPRMPVANPFPKERALPCDSARQVPNEYSRPAMEVSPSLCHSNIYSPKEAVPEEARSDIHYSVPEGPKPAVPSARNAPYFPCDKASKEEERPSSEDEIALHFEPPNAPLNRKGLVSPQSPQKSDCQPNSPTESCSSKNACILQASGSPPAKSPTDPKACNWKKYKFIVLNSLNQNAKPEGSEQAELGRLSPRAYPAPPACQPPMEPANLDLQSPTKLSASGEDSTIPQASRLNNLVNRSLAGSPRSSSESHSPLYMHPPKCTSCGSQSPQHTEMCLHTAGPTFPEEMGETQSEYSDSSCENGTFFCNECDCRFSEEASLKRHTLQTHSDKPYKCDRCQASFRYKGNLASHKTVHTGEKPYRCNICGAQFNRPANLKTHTRIHSGEKPYKCETCGARFVQVAHLRAHVLIHTGEKPYPCEICGTRFRHLQTLKSHLRIHTGEKPYHCEKCNLHFRHKSQLRLHLRQKHGAITNTKVQYRVSAADLPPELPKAC.

Residues 32–99 form the BTB domain; the sequence is TDVVIVVSRE…MYTSRLNLRE (68 aa). Residues 275–350 are disordered; the sequence is HYSVPEGPKP…QPNSPTESCS (76 aa). Over residues 299-315 the composition is skewed to basic and acidic residues; that stretch reads KASKEEERPSSEDEIAL. Positions 331-350 are enriched in polar residues; that stretch reads SPQSPQKSDCQPNSPTESCS. Position 334 is a phosphoserine (Ser-334). Ser-344 carries the phosphoserine; by MAPK1 modification. The residue at position 362 (Ser-362) is a Phosphoserine. The interval 377-380 is required for interaction with NuRD complex and for transcriptional repressor activity; sequence KKYK. Lys-380 is modified (N6-acetyllysine; by EP300). Phosphoserine is present on Ser-405. The segment at 405–469 is disordered; that stretch reads SPRAYPAPPA…RSSSESHSPL (65 aa). The span at 409–420 shows a compositional bias: pro residues; the sequence is YPAPPACQPPME. Positions 425–452 are enriched in polar residues; it reads DLQSPTKLSASGEDSTIPQASRLNNLVN. The span at 458–467 shows a compositional bias: low complexity; the sequence is SPRSSSESHS. 6 C2H2-type zinc fingers span residues 519-542, 547-569, 575-597, 603-625, 631-653, and 659-682; these read FFCN…LQTH, YKCD…KTVH, YRCN…TRIH, YKCE…VLIH, YPCE…LRIH, and YHCE…RQKH.

Homodimer. Interacts (via BTB domain) with the corepressors BCOR, NCOR1 and SMRT/NCOR2; the interactions are direct. Forms preferably ternary complexes with BCOR and SMRT/NCOR2 on target gene promoters but, on enhancer elements, interacts with SMRT/NCOR2 and HDAC3 to repress proximal gene expression. Interacts with histone deacetylases HDAC2, HDAC5 and HDAC9 (via the catalytic domain). Interacts with ZBTB7 and BCL6B. Interacts with SCF(FBXO11) complex; the interaction is independent of phosphorylation and promotes ubiquitination. Interacts (when phosphorylated) with PIN1; the interaction is required for BCL6 degradation upon genotoxic stress. Interacts with ZBTB17; inhibits ZBTB17 transcriptional activity. Interacts with CTBP1, autoinhibits its transcriptional expression. Interacts with NOTCH1 NCID and SIRT1; leads to a epigenetic repression of selective NOTCH1-target genes. Interacts (nor via BTB domain neither acetylated) with the NuRD complex components CHD4, HDAC1, MBD3 and MTA3; the interaction with MTA3 inhibits BCL6 acetylation and is required for BCL6 transpriptional repression. Post-translationally, phosphorylated by MAPK1 in response to antigen receptor activation at Ser-334 and Ser-344. Phosphorylated by ATM in response to genotoxic stress. Phosphorylation induces its degradation by ubiquitin/proteasome pathway. In terms of processing, polyubiquitinated. Polyubiquitinated by SCF(FBXO11), leading to its degradation by the proteasome. Ubiquitinated by the SCF(FBXL17) complex, leading to its degradation by the proteasome: ubiquitination by the SCF(FBXL17) complex takes place when aberrant BTB domain dimers are formed. Acetylated at Lys-380 by EP300 which inhibits the interaction with NuRD complex and the transcriptional repressor function. Deacetylated by HDAC- and SIR2-dependent pathways. As to expression, expressed at least in germinal center B-cells of spleen.

The protein resides in the nucleus. Transcriptional repressor mainly required for germinal center (GC) formation and antibody affinity maturation which has different mechanisms of action specific to the lineage and biological functions. Forms complexes with different corepressors and histone deacetylases to repress the transcriptional expression of different subsets of target genes. Represses its target genes by binding directly to the DNA sequence 5'-TTCCTAGAA-3' (BCL6-binding site) or indirectly by repressing the transcriptional activity of transcription factors. In GC B-cells, represses genes that function in differentiation, inflammation, apoptosis and cell cycle control, also autoregulates its transcriptional expression and up-regulates, indirectly, the expression of some genes important for GC reactions, such as AICDA, through the repression of microRNAs expression, like miR155. An important function is to allow GC B-cells to proliferate very rapidly in response to T-cell dependent antigens and tolerate the physiological DNA breaks required for immunglobulin class switch recombination and somatic hypermutation without inducing a p53/TP53-dependent apoptotic response. In follicular helper CD4(+) T-cells (T(FH) cells), promotes the expression of T(FH)-related genes but inhibits the differentiation of T(H)1, T(H)2 and T(H)17 cells. Also required for the establishment and maintenance of immunological memory for both T- and B-cells. Suppresses macrophage proliferation through competition with STAT5 for STAT-binding motifs binding on certain target genes, such as CCL2 and CCND2. In response to genotoxic stress, controls cell cycle arrest in GC B-cells in both p53/TP53-dependedent and -independent manners. Besides, also controls neurogenesis through the alteration of the composition of NOTCH-dependent transcriptional complexes at selective NOTCH targets, such as HES5, including the recruitment of the deacetylase SIRT1 and resulting in an epigenetic silencing leading to neuronal differentiation. The chain is B-cell lymphoma 6 protein homolog (Bcl6) from Mus musculus (Mouse).